Consider the following 446-residue polypeptide: Tol-Pal system protein TolB (446 aa).

The N-terminal stretch at 1–36 (MMDVQTVRRGNAVQSLMSKLILPLVMAVAFALPARA) is a signal peptide. The segment at 424 to 446 (GYNERPSPTPTFASDPAWSPRIQ) is disordered.

Belongs to the TolB family. In terms of assembly, the Tol-Pal system is composed of five core proteins: the inner membrane proteins TolA, TolQ and TolR, the periplasmic protein TolB and the outer membrane protein Pal. They form a network linking the inner and outer membranes and the peptidoglycan layer.

The protein localises to the periplasm. Functionally, part of the Tol-Pal system, which plays a role in outer membrane invagination during cell division and is important for maintaining outer membrane integrity. The polypeptide is Tol-Pal system protein TolB (Parvibaculum lavamentivorans (strain DS-1 / DSM 13023 / NCIMB 13966)).